The chain runs to 353 residues: Photosystem II protein D1 (353 aa).

N-acetylthreonine is present on T2. The residue at position 2 (T2) is a Phosphothreonine. 3 consecutive transmembrane segments (helical) span residues 29-46, 118-133, and 142-156; these read YIGWFGVLMIPTLLTATS, HFLLGVACYMGREWEL, and WIAVAYSAPVAAATA. H118 is a chlorophyll a binding site. A pheophytin a-binding site is contributed by Y126. D170 and E189 together coordinate [CaMn4O5] cluster. Residues 197-218 traverse the membrane as a helical segment; it reads FHMLGVAGVFGGSLFSAMHGSL. H198 is a chlorophyll a binding site. Residues H215 and 264 to 265 each bind a quinone; that span reads SF. H215 provides a ligand contact to Fe cation. H272 provides a ligand contact to Fe cation. Residues 274–288 form a helical membrane-spanning segment; sequence FLAAWPVVGIWFTAL. [CaMn4O5] cluster is bound by residues H332, E333, D342, and A344. Positions 345-353 are excised as a propeptide; sequence AVESPSING.

The protein belongs to the reaction center PufL/M/PsbA/D family. PSII is composed of 1 copy each of membrane proteins PsbA, PsbB, PsbC, PsbD, PsbE, PsbF, PsbH, PsbI, PsbJ, PsbK, PsbL, PsbM, PsbT, PsbX, PsbY, PsbZ, Psb30/Ycf12, at least 3 peripheral proteins of the oxygen-evolving complex and a large number of cofactors. It forms dimeric complexes. Requires The D1/D2 heterodimer binds P680, chlorophylls that are the primary electron donor of PSII, and subsequent electron acceptors. It shares a non-heme iron and each subunit binds pheophytin, quinone, additional chlorophylls, carotenoids and lipids. D1 provides most of the ligands for the Mn4-Ca-O5 cluster of the oxygen-evolving complex (OEC). There is also a Cl(-1) ion associated with D1 and D2, which is required for oxygen evolution. The PSII complex binds additional chlorophylls, carotenoids and specific lipids. as cofactor. In terms of processing, tyr-161 forms a radical intermediate that is referred to as redox-active TyrZ, YZ or Y-Z. C-terminally processed by CTPA; processing is essential to allow assembly of the oxygen-evolving complex and thus photosynthetic growth.

It localises to the plastid. It is found in the chloroplast thylakoid membrane. It catalyses the reaction 2 a plastoquinone + 4 hnu + 2 H2O = 2 a plastoquinol + O2. Functionally, photosystem II (PSII) is a light-driven water:plastoquinone oxidoreductase that uses light energy to abstract electrons from H(2)O, generating O(2) and a proton gradient subsequently used for ATP formation. It consists of a core antenna complex that captures photons, and an electron transfer chain that converts photonic excitation into a charge separation. The D1/D2 (PsbA/PsbD) reaction center heterodimer binds P680, the primary electron donor of PSII as well as several subsequent electron acceptors. The protein is Photosystem II protein D1 of Sinapis alba (White mustard).